The chain runs to 161 residues: Large ribosomal subunit protein uL11 (161 aa).

This sequence belongs to the universal ribosomal protein uL11 family. In terms of assembly, part of the ribosomal stalk of the 50S ribosomal subunit. Interacts with L10 and the large rRNA to form the base of the stalk. L10 forms an elongated spine to which L12 dimers bind in a sequential fashion forming a multimeric L10(L12)X complex.

Its function is as follows. Forms part of the ribosomal stalk which helps the ribosome interact with GTP-bound translation factors. This is Large ribosomal subunit protein uL11 from Methanococcoides burtonii (strain DSM 6242 / NBRC 107633 / OCM 468 / ACE-M).